The primary structure comprises 179 residues: NADH dehydrogenase [ubiquinone] 1 beta subcomplex subunit 9 (179 aa).

Position 2 is an N-acetylalanine (alanine 2). At serine 85 the chain carries Phosphoserine. The disordered stretch occupies residues 136–162; it reads EVKQLQEETPPGGPLTEALPPARKEGD.

The protein belongs to the complex I LYR family. As to quaternary structure, mammalian complex I is composed of 45 different subunits.

The protein localises to the mitochondrion inner membrane. Accessory subunit of the mitochondrial membrane respiratory chain NADH dehydrogenase (Complex I), that is believed to be not involved in catalysis. Complex I functions in the transfer of electrons from NADH to the respiratory chain. The immediate electron acceptor for the enzyme is believed to be ubiquinone. This Homo sapiens (Human) protein is NADH dehydrogenase [ubiquinone] 1 beta subcomplex subunit 9 (NDUFB9).